The primary structure comprises 343 residues: N-acetyl-gamma-glutamyl-phosphate reductase (343 aa).

Residue Cys-148 is part of the active site.

The protein belongs to the NAGSA dehydrogenase family. Type 1 subfamily.

It is found in the cytoplasm. The catalysed reaction is N-acetyl-L-glutamate 5-semialdehyde + phosphate + NADP(+) = N-acetyl-L-glutamyl 5-phosphate + NADPH + H(+). Its pathway is amino-acid biosynthesis; L-arginine biosynthesis; N(2)-acetyl-L-ornithine from L-glutamate: step 3/4. Functionally, catalyzes the NADPH-dependent reduction of N-acetyl-5-glutamyl phosphate to yield N-acetyl-L-glutamate 5-semialdehyde. The protein is N-acetyl-gamma-glutamyl-phosphate reductase of Caldicellulosiruptor saccharolyticus (strain ATCC 43494 / DSM 8903 / Tp8T 6331).